A 247-amino-acid chain; its full sequence is ATP synthase subunit a, chloroplastic (247 aa).

5 consecutive transmembrane segments (helical) span residues 38–58, 95–115, 134–154, 199–219, and 220–240; these read QVLI…TLAV, VPFI…GALL, INTT…AGIS, LVVV…VMFL, and GLFT…AYIG.

The protein belongs to the ATPase A chain family. As to quaternary structure, F-type ATPases have 2 components, CF(1) - the catalytic core - and CF(0) - the membrane proton channel. CF(1) has five subunits: alpha(3), beta(3), gamma(1), delta(1), epsilon(1). CF(0) has four main subunits: a, b, b' and c.

The protein localises to the plastid. It is found in the chloroplast thylakoid membrane. Its function is as follows. Key component of the proton channel; it plays a direct role in the translocation of protons across the membrane. The polypeptide is ATP synthase subunit a, chloroplastic (Daucus carota (Wild carrot)).